The primary structure comprises 309 residues: Homoserine kinase (309 aa).

85–95 is an ATP binding site; it reads PYGLGLGSSGS.

The protein belongs to the GHMP kinase family. Homoserine kinase subfamily.

Its subcellular location is the cytoplasm. The enzyme catalyses L-homoserine + ATP = O-phospho-L-homoserine + ADP + H(+). It functions in the pathway amino-acid biosynthesis; L-threonine biosynthesis; L-threonine from L-aspartate: step 4/5. Catalyzes the ATP-dependent phosphorylation of L-homoserine to L-homoserine phosphate. This Thermoplasma volcanium (strain ATCC 51530 / DSM 4299 / JCM 9571 / NBRC 15438 / GSS1) protein is Homoserine kinase.